The chain runs to 397 residues: Putative nickel insertion protein (397 aa).

The protein belongs to the LarC family.

The protein is Putative nickel insertion protein of Synechococcus sp. (strain JA-3-3Ab) (Cyanobacteria bacterium Yellowstone A-Prime).